The following is a 251-amino-acid chain: Small ribosomal subunit protein uS2 (251 aa).

The protein belongs to the universal ribosomal protein uS2 family.

This is Small ribosomal subunit protein uS2 from Synechococcus elongatus (strain ATCC 33912 / PCC 7942 / FACHB-805) (Anacystis nidulans R2).